The sequence spans 128 residues: Tachykinin-4 (128 aa).

A signal peptide spans 1 to 16 (MLPLLALLLLIGPSVC). Positions 17-54 (TTAGDREELAFGAEAESWVTVNLKGIPVPSIELKLQEL) are excised as a propeptide. Met66 is modified (methionine amide). Positions 69 to 128 (RVGGYQLGRIVQDLLGTRGLSIEGTCRQAASQQRARPGAVTRESLQSREEDEAPLTTSNV) are excised as a propeptide. Residues 96–128 (QAASQQRARPGAVTRESLQSREEDEAPLTTSNV) form a disordered region.

The protein belongs to the tachykinin family. In terms of tissue distribution, expressed in hematopoietic cells with highest levels in pre- and pro-B cells but not in later developmental stages. Also detected in uterus, skeletal muscle, brain, spleen, stomach, skin and lactating mammary gland and in cells of myeloid lineage including dendritic and microglial cells and macrophages. In uterus, highest expression is observed in non-pregnant diestrus mice and in day 5 pregnant mice. Compared with mice in diestrus, decreases 2.6-fold in uteri from non-pregnant mice in estrus and 10.2-fold in day 17 pregnant mice. Detected at sites of chronic inflammation such as granulomas.

Its subcellular location is the secreted. Its function is as follows. Tachykinins are active peptides which excite neurons, evoke behavioral responses, are potent vasodilators and secretagogues, and contract (directly or indirectly) many smooth muscles. Hemokinin induces plasma extravasation, mast cell degranulation, muscle contraction, salivary secretion and scratching behavior. Increases sperm motility. Induces potent analgesic effects and may play a role in pain modulation. Promotes survival of bone marrow B lineage cells and of cultured LPS-stimulated pre-B cells and may act as an autocrine factor required for B-cell survival and proliferation. Lowers systemic arterial pressure following intravenous injection. Induces interferon-gamma production and may play a role in the inflammatory response. Shows potent affinity and specificity for the NK-1 receptor. The polypeptide is Tachykinin-4 (Mus musculus (Mouse)).